Here is a 212-residue protein sequence, read N- to C-terminus: Peptide methionine sulfoxide reductase MsrA (212 aa).

C51 is an active-site residue.

Belongs to the MsrA Met sulfoxide reductase family.

The enzyme catalyses L-methionyl-[protein] + [thioredoxin]-disulfide + H2O = L-methionyl-(S)-S-oxide-[protein] + [thioredoxin]-dithiol. It carries out the reaction [thioredoxin]-disulfide + L-methionine + H2O = L-methionine (S)-S-oxide + [thioredoxin]-dithiol. Has an important function as a repair enzyme for proteins that have been inactivated by oxidation. Catalyzes the reversible oxidation-reduction of methionine sulfoxide in proteins to methionine. The chain is Peptide methionine sulfoxide reductase MsrA from Vibrio cholerae serotype O1 (strain ATCC 39541 / Classical Ogawa 395 / O395).